The chain runs to 342 residues: Glucokinase (342 aa).

18–23 (GDIGGT) provides a ligand contact to ATP.

It belongs to the bacterial glucokinase family.

It is found in the cytoplasm. The catalysed reaction is D-glucose + ATP = D-glucose 6-phosphate + ADP + H(+). The polypeptide is Glucokinase (Chelativorans sp. (strain BNC1)).